The sequence spans 76 residues: Omega-conotoxin-like TxMKLT1-0141 (76 aa).

The first 22 residues, M1–A22, serve as a signal peptide directing secretion. Residues D23–E50 constitute a propeptide that is removed on maturation. 3 disulfides stabilise this stretch: C52–C67, C59–C70, and C66–C75.

This sequence belongs to the conotoxin O1 superfamily. Expressed by the venom duct.

Its subcellular location is the secreted. Its function is as follows. Omega-conotoxins act at presynaptic membranes, they bind and block voltage-gated calcium channels (Cav). This chain is Omega-conotoxin-like TxMKLT1-0141, found in Conus textile (Cloth-of-gold cone).